We begin with the raw amino-acid sequence, 447 residues long: UPF0210 protein LCK_00974 (447 aa).

This sequence belongs to the UPF0210 family. Homodimer.

The polypeptide is UPF0210 protein LCK_00974 (Leuconostoc citreum (strain KM20)).